The following is a 430-amino-acid chain: 3-phosphoshikimate 1-carboxyvinyltransferase (430 aa).

Residues Lys20, Ser21, and Arg25 each contribute to the 3-phosphoshikimate site. Lys20 lines the phosphoenolpyruvate pocket. Residues Gly92 and Arg120 each contribute to the phosphoenolpyruvate site. 3-phosphoshikimate contacts are provided by Ser166, Gln168, Asp312, and Lys339. Gln168 is a binding site for phosphoenolpyruvate. Asp312 serves as the catalytic Proton acceptor. 2 residues coordinate phosphoenolpyruvate: Arg343 and Arg387.

It belongs to the EPSP synthase family. As to quaternary structure, monomer.

The protein resides in the cytoplasm. The catalysed reaction is 3-phosphoshikimate + phosphoenolpyruvate = 5-O-(1-carboxyvinyl)-3-phosphoshikimate + phosphate. The protein operates within metabolic intermediate biosynthesis; chorismate biosynthesis; chorismate from D-erythrose 4-phosphate and phosphoenolpyruvate: step 6/7. Catalyzes the transfer of the enolpyruvyl moiety of phosphoenolpyruvate (PEP) to the 5-hydroxyl of shikimate-3-phosphate (S3P) to produce enolpyruvyl shikimate-3-phosphate and inorganic phosphate. This chain is 3-phosphoshikimate 1-carboxyvinyltransferase, found in Lactococcus lactis subsp. cremoris (strain MG1363).